A 55-amino-acid chain; its full sequence is Large ribosomal subunit protein bL32 (55 aa).

Positions 1-19 (MAVPKFKKSRANTRARRSQ) are enriched in basic residues. The disordered stretch occupies residues 1-22 (MAVPKFKKSRANTRARRSQWKA).

This sequence belongs to the bacterial ribosomal protein bL32 family.

The sequence is that of Large ribosomal subunit protein bL32 from Corynebacterium urealyticum (strain ATCC 43042 / DSM 7109).